Reading from the N-terminus, the 900-residue chain is Translation initiation factor IF-2 (900 aa).

Composition is skewed to basic and acidic residues over residues 119-158 (AAKA…EKQE), 165-191 (ADEK…KADA), and 198-229 (EEAR…DHHV). Positions 119-306 (AAKAEAEAKA…NARSVAPESM (188 aa)) are disordered. Residues 257 to 272 (SANAGNNANSNSNAGS) are compositionally biased toward low complexity. A tr-type G domain is found at 400-569 (PRAPVVTIMG…LLESEVLELK (170 aa)). Residues 409 to 416 (GHVDHGKT) are G1. Residue 409 to 416 (GHVDHGKT) coordinates GTP. Residues 434–438 (GITQH) are G2. The segment at 455 to 458 (DTPG) is G3. GTP-binding positions include 455–459 (DTPGH) and 509–512 (NKID). The tract at residues 509 to 512 (NKID) is G4. The segment at 545 to 547 (SAK) is G5.

It belongs to the TRAFAC class translation factor GTPase superfamily. Classic translation factor GTPase family. IF-2 subfamily.

The protein localises to the cytoplasm. Its function is as follows. One of the essential components for the initiation of protein synthesis. Protects formylmethionyl-tRNA from spontaneous hydrolysis and promotes its binding to the 30S ribosomal subunits. Also involved in the hydrolysis of GTP during the formation of the 70S ribosomal complex. This chain is Translation initiation factor IF-2, found in Shewanella piezotolerans (strain WP3 / JCM 13877).